The chain runs to 366 residues: S-adenosylmethionine:tRNA ribosyltransferase-isomerase (366 aa).

The protein belongs to the QueA family. In terms of assembly, monomer.

The protein resides in the cytoplasm. The catalysed reaction is 7-aminomethyl-7-carbaguanosine(34) in tRNA + S-adenosyl-L-methionine = epoxyqueuosine(34) in tRNA + adenine + L-methionine + 2 H(+). Its pathway is tRNA modification; tRNA-queuosine biosynthesis. Its function is as follows. Transfers and isomerizes the ribose moiety from AdoMet to the 7-aminomethyl group of 7-deazaguanine (preQ1-tRNA) to give epoxyqueuosine (oQ-tRNA). The sequence is that of S-adenosylmethionine:tRNA ribosyltransferase-isomerase from Synechococcus sp. (strain CC9605).